The following is a 155-amino-acid chain: Small ribosomal subunit protein uS7c (155 aa).

It belongs to the universal ribosomal protein uS7 family. Part of the 30S ribosomal subunit.

It localises to the plastid. It is found in the chloroplast. In terms of biological role, one of the primary rRNA binding proteins, it binds directly to 16S rRNA where it nucleates assembly of the head domain of the 30S subunit. This Houttuynia cordata (Chameleon plant) protein is Small ribosomal subunit protein uS7c (rps7).